The following is a 139-amino-acid chain: Histone H2B (139 aa).

A compositionally biased stretch (basic and acidic residues) spans 1 to 10 (MAPKAAEKKP). The segment at 1–47 (MAPKAAEKKPSTGGKAPAGGKAPAEKKEAGKKTAASGEKKKRTKARK) is disordered. N6-acetyllysine; alternate occurs at positions 8 and 9. Glycyl lysine isopeptide (Lys-Gly) (interchain with G-Cter in SUMO); alternate cross-links involve residues Lys-8 and Lys-9. Over residues 11–22 (STGGKAPAGGKA) the composition is skewed to low complexity. N6-acetyllysine is present on Lys-15. N6-acetyllysine; alternate is present on Lys-26. Lys-26 participates in a covalent cross-link: Glycyl lysine isopeptide (Lys-Gly) (interchain with G-Cter in SUMO); alternate. Lys-27 participates in a covalent cross-link: Glycyl lysine isopeptide (Lys-Gly) (interchain with G-Cter in SUMO). Residue Lys-133 forms a Glycyl lysine isopeptide (Lys-Gly) (interchain with G-Cter in ubiquitin) linkage.

The protein belongs to the histone H2B family. As to quaternary structure, the nucleosome is a histone octamer containing two molecules each of H2A, H2B, H3 and H4 assembled in one H3-H4 heterotetramer and two H2A-H2B heterodimers. The octamer wraps approximately 147 bp of DNA. Post-translationally, monoubiquitinated by the UBC2-BRE1 complex to form H2BK123ub1. H2BK123ub1 gives a specific tag for epigenetic transcriptional activation and is also prerequisite for H3K4me and H3K79me formation. H2BK123ub1 also modulates the formation of double-strand breaks during meiosis and is a prerequisite for DNA-damage checkpoint activation. In terms of processing, acetylated by GCN5 to form H2BK11ac and H2BK16ac. H2BK16ac can also be formed by ESA1. Acetylation of N-terminal lysines and particularly formation of H2BK11acK16ac has a positive effect on transcription. Sumoylation to form H2BK6su or H2BK7su, and probably also H2BK16su or H2BK17su, occurs preferentially near the telomeres and represses gene transcription.

It is found in the nucleus. The protein resides in the chromosome. Functionally, core component of nucleosome. Nucleosomes wrap and compact DNA into chromatin, limiting DNA accessibility to the cellular machineries which require DNA as a template. Histones thereby play a central role in transcription regulation, DNA repair, DNA replication and chromosomal stability. DNA accessibility is regulated via a complex set of post-translational modifications of histones, also called histone code, and nucleosome remodeling. The polypeptide is Histone H2B (HTB1) (Coccidioides immitis (strain RS) (Valley fever fungus)).